A 344-amino-acid polypeptide reads, in one-letter code: Anthranilate phosphoribosyltransferase (344 aa).

Residues Gly84, 87–88 (GD), Ser92, 94–97 (NIST), 112–120 (KHGNRSASG), and Ser124 contribute to the 5-phospho-alpha-D-ribose 1-diphosphate site. Residue Gly84 coordinates anthranilate. Ser96 provides a ligand contact to Mg(2+). Residue Asn115 participates in anthranilate binding. Arg170 provides a ligand contact to anthranilate. Residues Asp229 and Glu230 each coordinate Mg(2+).

It belongs to the anthranilate phosphoribosyltransferase family. Homodimer. The cofactor is Mg(2+).

It carries out the reaction N-(5-phospho-beta-D-ribosyl)anthranilate + diphosphate = 5-phospho-alpha-D-ribose 1-diphosphate + anthranilate. It functions in the pathway amino-acid biosynthesis; L-tryptophan biosynthesis; L-tryptophan from chorismate: step 2/5. Functionally, catalyzes the transfer of the phosphoribosyl group of 5-phosphorylribose-1-pyrophosphate (PRPP) to anthranilate to yield N-(5'-phosphoribosyl)-anthranilate (PRA). The polypeptide is Anthranilate phosphoribosyltransferase (Synechococcus sp. (strain RCC307)).